The chain runs to 332 residues: Chitin synthase export chaperone (332 aa).

The next 7 membrane-spanning stretches (helical) occupy residues 51-71 (CAND…IIHV), 86-106 (VFYI…GVTA), 121-141 (GLVS…FQLY), 149-169 (VWLL…VSLL), 182-202 (PIGI…VYVV), 218-238 (LGDI…LYVF), and 248-268 (HYID…MMVY).

The protein belongs to the CHS7 family. As to quaternary structure, interacts with CHS3.

The protein resides in the endoplasmic reticulum membrane. Its function is as follows. Chaperone required for the export of the chitin synthase CHS3 from the endoplasmic reticulum. In Phaeosphaeria nodorum (strain SN15 / ATCC MYA-4574 / FGSC 10173) (Glume blotch fungus), this protein is Chitin synthase export chaperone (CHS7).